We begin with the raw amino-acid sequence, 69 residues long: Small ribosomal subunit protein bS21 (69 aa).

Belongs to the bacterial ribosomal protein bS21 family.

This Treponema pallidum (strain Nichols) protein is Small ribosomal subunit protein bS21 (rpsU).